The sequence spans 102 residues: Glutaredoxin-C13 (102 aa).

The Glutaredoxin domain occupies 1–101 (MDKVMRMSSE…PLIKPYQSIL (101 aa)). A disulfide bridge links C21 with C24.

This sequence belongs to the glutaredoxin family. CC-type subfamily.

It localises to the cytoplasm. Has a glutathione-disulfide oxidoreductase activity in the presence of NADPH and glutathione reductase. Reduces low molecular weight disulfides and proteins. The protein is Glutaredoxin-C13 (GRXC13) of Arabidopsis thaliana (Mouse-ear cress).